Reading from the N-terminus, the 296-residue chain is Origin of replication complex subunit 6 (296 aa).

The segment at 212 to 296 is disordered; the sequence is PSKRKHDDDS…MALEVSSAAN (85 aa). The span at 220-236 shows a compositional bias: acidic residues; that stretch reads DSDSSGESSGDDQDELD. Over residues 254 to 264 the composition is skewed to polar residues; sequence WKSSVLSSNKQ.

The protein belongs to the ORC6 family. As to quaternary structure, component of the origin recognition complex (ORC) composed of at least ORC1, ORC2, ORC3, ORC4, ORC5 and ORC6. ORC is regulated in a cell-cycle and development dependent manner. It is sequentially assembled at the exit from anaphase of mitosis and disassembled as cells enter S phase.

It localises to the nucleus. Its function is as follows. Component of the origin recognition complex (ORC) that binds origins of replication. DNA-binding is ATP-dependent. The specific DNA sequences that define origins of replication have not been identified yet. ORC is required to assemble the pre-replication complex necessary to initiate DNA replication. In Oryza sativa subsp. indica (Rice), this protein is Origin of replication complex subunit 6.